Reading from the N-terminus, the 153-residue chain is uncharacterized protein (153 aa).

Positions 72–98 (LPISKTNDAERSQQTTKAPVMERTESS) are disordered.

It localises to the cytoplasm. The protein resides in the nucleus. This is an uncharacterized protein from Schizosaccharomyces pombe (strain 972 / ATCC 24843) (Fission yeast).